Reading from the N-terminus, the 318-residue chain is Ribose-phosphate pyrophosphokinase 2 (318 aa).

Residues D132, H134, H143, and D147 each coordinate Mg(2+).

This sequence belongs to the ribose-phosphate pyrophosphokinase family.

It is found in the cytoplasm. It catalyses the reaction D-ribose 5-phosphate + ATP = 5-phospho-alpha-D-ribose 1-diphosphate + AMP + H(+). The protein operates within metabolic intermediate biosynthesis; 5-phospho-alpha-D-ribose 1-diphosphate biosynthesis; 5-phospho-alpha-D-ribose 1-diphosphate from D-ribose 5-phosphate (route I): step 1/1. 5-phosphoribose 1-diphosphate synthase involved in nucleotide, histidine, and tryptophan biosynthesis. Active in heteromultimeric complexes with other 5-phosphoribose 1-diphosphate synthases (PRS2, PRS3, PRS4 and PRS5). The sequence is that of Ribose-phosphate pyrophosphokinase 2 (PRS2) from Saccharomyces cerevisiae (strain ATCC 204508 / S288c) (Baker's yeast).